The primary structure comprises 203 residues: 3-isopropylmalate dehydratase small subunit (203 aa).

This sequence belongs to the LeuD family. LeuD type 1 subfamily. In terms of assembly, heterodimer of LeuC and LeuD.

The catalysed reaction is (2R,3S)-3-isopropylmalate = (2S)-2-isopropylmalate. The protein operates within amino-acid biosynthesis; L-leucine biosynthesis; L-leucine from 3-methyl-2-oxobutanoate: step 2/4. Its function is as follows. Catalyzes the isomerization between 2-isopropylmalate and 3-isopropylmalate, via the formation of 2-isopropylmaleate. This Symbiobacterium thermophilum (strain DSM 24528 / JCM 14929 / IAM 14863 / T) protein is 3-isopropylmalate dehydratase small subunit.